Reading from the N-terminus, the 636-residue chain is Translation factor GUF1 homolog, chloroplastic (636 aa).

Positions 31-212 (NLARNFSIIA…AIVTKIPPPQ (182 aa)) constitute a tr-type G domain. Residues 40 to 47 (AHIDHGKS), 105 to 109 (DTPGH), and 159 to 162 (NKID) contribute to the GTP site.

The protein belongs to the TRAFAC class translation factor GTPase superfamily. Classic translation factor GTPase family. LepA subfamily.

The protein localises to the plastid. It localises to the chloroplast. The catalysed reaction is GTP + H2O = GDP + phosphate + H(+). Functionally, promotes chloroplast protein synthesis. May act as a fidelity factor of the translation reaction, by catalyzing a one-codon backward translocation of tRNAs on improperly translocated ribosomes. The protein is Translation factor GUF1 homolog, chloroplastic of Oryza sativa subsp. indica (Rice).